The primary structure comprises 267 residues: Acetyl-coenzyme A carboxylase carboxyl transferase subunit beta 1 (267 aa).

The 259-residue stretch at 9-267 (TWQACPKCGR…NYGIGRSAHG (259 aa)) folds into the CoA carboxyltransferase N-terminal domain. 4 residues coordinate Zn(2+): Cys-13, Cys-16, Cys-31, and Cys-34. The segment at 13 to 34 (CPKCGRHVHQRQWGTYQQCPYC) adopts a C4-type zinc-finger fold.

It belongs to the AccD/PCCB family. In terms of assembly, acetyl-CoA carboxylase is a heterohexamer composed of biotin carboxyl carrier protein (AccB), biotin carboxylase (AccC) and two subunits each of ACCase subunit alpha (AccA) and ACCase subunit beta (AccD). Zn(2+) serves as cofactor.

The protein resides in the cytoplasm. It carries out the reaction N(6)-carboxybiotinyl-L-lysyl-[protein] + acetyl-CoA = N(6)-biotinyl-L-lysyl-[protein] + malonyl-CoA. It participates in lipid metabolism; malonyl-CoA biosynthesis; malonyl-CoA from acetyl-CoA: step 1/1. Functionally, component of the acetyl coenzyme A carboxylase (ACC) complex. Biotin carboxylase (BC) catalyzes the carboxylation of biotin on its carrier protein (BCCP) and then the CO(2) group is transferred by the transcarboxylase to acetyl-CoA to form malonyl-CoA. This is Acetyl-coenzyme A carboxylase carboxyl transferase subunit beta 1 from Lactiplantibacillus plantarum (strain JDM1) (Lactobacillus plantarum).